A 1869-amino-acid chain; its full sequence is Chitin synthase 6 (1869 aa).

Residues 1-23 are disordered; it reads MAMNLPPLAGSGGAHTQPSLPAL. The Myosin motor domain occupies 1–778; it reads MAMNLPPLAG…EIAHLSEASL (778 aa). 104–111 is a binding site for ATP; the sequence is GESGSGKS. N123, N417, N426, and N557 each carry an N-linked (GlcNAc...) asparagine glycan. 2 disordered regions span residues 593–612 and 620–640; these read KPMR…ARNQ and AEEE…AAKA. The segment covering 629–640 has biased composition (low complexity); the sequence is ENNSQAGGAAKA. N-linked (GlcNAc...) asparagine glycosylation is found at N630 and N657. Positions 655–679 are actin-binding; sequence LDNVTKAVADPSTNSYFVFCLKPND. 2 consecutive transmembrane segments (helical) span residues 886–906 and 925–945; these read WLFM…RFIG and LIIW…PMLI. One can recognise a Cytochrome b5 heme-binding domain in the interval 949-1010; sequence QHVYSAAELS…YAGKDATSLF (62 aa). N-linked (GlcNAc...) asparagine glycosylation is found at N1037, N1062, and N1165. The chain crosses the membrane as a helical span at residues 1201-1221; that stretch reads LVLAISIMLVTIIAFKFFAAL. Residues N1458 and N1564 are each glycosylated (N-linked (GlcNAc...) asparagine). Transmembrane regions (helical) follow at residues 1596-1616, 1622-1642, and 1649-1669; these read LSTV…VMVI, VPVT…IIFI, and MIGW…GLPL. N1778 is a glycosylation site (N-linked (GlcNAc...) asparagine). A DEK-C domain is found at 1811-1866; that stretch reads LPSDDALLAEIREILRTADLMTVTKKGIKQELERRFGVPLDAKRAYINSATEALLS.

In the N-terminal section; belongs to the TRAFAC class myosin-kinesin ATPase superfamily. Myosin family. This sequence in the C-terminal section; belongs to the chitin synthase family. Class V subfamily.

It is found in the cell membrane. The enzyme catalyses [(1-&gt;4)-N-acetyl-beta-D-glucosaminyl](n) + UDP-N-acetyl-alpha-D-glucosamine = [(1-&gt;4)-N-acetyl-beta-D-glucosaminyl](n+1) + UDP + H(+). Functionally, polymerizes chitin, a structural polymer of the cell wall and septum, by transferring the sugar moiety of UDP-GlcNAc to the non-reducing end of the growing chitin polymer. Plays a role in cell wall integrity and is involved in tolerance to hyperosmotic conditions. Required to successfully penetrate the host plants and thus plays a key role in pathogenicity. This chain is Chitin synthase 6, found in Verticillium dahliae (strain VdLs.17 / ATCC MYA-4575 / FGSC 10137) (Verticillium wilt).